A 285-amino-acid chain; its full sequence is ATP phosphoribosyltransferase (285 aa).

Belongs to the ATP phosphoribosyltransferase family. Long subfamily. The cofactor is Mg(2+).

Its subcellular location is the cytoplasm. The catalysed reaction is 1-(5-phospho-beta-D-ribosyl)-ATP + diphosphate = 5-phospho-alpha-D-ribose 1-diphosphate + ATP. It participates in amino-acid biosynthesis; L-histidine biosynthesis; L-histidine from 5-phospho-alpha-D-ribose 1-diphosphate: step 1/9. Feedback inhibited by histidine. Catalyzes the condensation of ATP and 5-phosphoribose 1-diphosphate to form N'-(5'-phosphoribosyl)-ATP (PR-ATP). Has a crucial role in the pathway because the rate of histidine biosynthesis seems to be controlled primarily by regulation of HisG enzymatic activity. This is ATP phosphoribosyltransferase from Metallosphaera sedula (strain ATCC 51363 / DSM 5348 / JCM 9185 / NBRC 15509 / TH2).